The chain runs to 257 residues: Probable enoyl-CoA hydratase echA8 (257 aa).

Belongs to the enoyl-CoA hydratase/isomerase family.

The enzyme catalyses a (3S)-3-hydroxyacyl-CoA = a (2E)-enoyl-CoA + H2O. It catalyses the reaction a 4-saturated-(3S)-3-hydroxyacyl-CoA = a (3E)-enoyl-CoA + H2O. Functionally, could possibly oxidize fatty acids using specific components. This is Probable enoyl-CoA hydratase echA8 (echA8) from Mycobacterium leprae (strain TN).